The sequence spans 126 residues: Ribonuclease P protein component (126 aa).

The protein belongs to the RnpA family. In terms of assembly, consists of a catalytic RNA component (M1 or rnpB) and a protein subunit.

It catalyses the reaction Endonucleolytic cleavage of RNA, removing 5'-extranucleotides from tRNA precursor.. Functionally, RNaseP catalyzes the removal of the 5'-leader sequence from pre-tRNA to produce the mature 5'-terminus. It can also cleave other RNA substrates such as 4.5S RNA. The protein component plays an auxiliary but essential role in vivo by binding to the 5'-leader sequence and broadening the substrate specificity of the ribozyme. In Synechococcus sp. (strain JA-3-3Ab) (Cyanobacteria bacterium Yellowstone A-Prime), this protein is Ribonuclease P protein component.